The sequence spans 445 residues: Phosphoglucosamine mutase (445 aa).

The active-site Phosphoserine intermediate is the Ser102. Mg(2+) contacts are provided by Ser102, Asp241, Asp243, and Asp245. Ser102 carries the phosphoserine modification.

The protein belongs to the phosphohexose mutase family. Mg(2+) serves as cofactor. In terms of processing, activated by phosphorylation.

It catalyses the reaction alpha-D-glucosamine 1-phosphate = D-glucosamine 6-phosphate. Functionally, catalyzes the conversion of glucosamine-6-phosphate to glucosamine-1-phosphate. This is Phosphoglucosamine mutase from Enterobacter sp. (strain 638).